We begin with the raw amino-acid sequence, 453 residues long: Glutamyl-tRNA(Gln) amidotransferase subunit A (453 aa).

Catalysis depends on charge relay system residues Lys-53 and Ser-128. Catalysis depends on Ser-152, which acts as the Acyl-ester intermediate.

Belongs to the amidase family. GatA subfamily. In terms of assembly, heterotrimer of A, B and C subunits.

It carries out the reaction L-glutamyl-tRNA(Gln) + L-glutamine + ATP + H2O = L-glutaminyl-tRNA(Gln) + L-glutamate + ADP + phosphate + H(+). In terms of biological role, allows the formation of correctly charged Gln-tRNA(Gln) through the transamidation of misacylated Glu-tRNA(Gln) in organisms which lack glutaminyl-tRNA synthetase. The reaction takes place in the presence of glutamine and ATP through an activated gamma-phospho-Glu-tRNA(Gln). This chain is Glutamyl-tRNA(Gln) amidotransferase subunit A, found in Helicobacter pylori (strain G27).